A 231-amino-acid polypeptide reads, in one-letter code: Lytic polysaccharide monooxygenase-like protein X325 (231 aa).

A signal peptide spans 1–17; sequence MRLSLLVTLALTALIEA. His-18 provides a ligand contact to Cu(2+). Residues Asn-34, Asn-55, Asn-98, Asn-133, Asn-174, and Asn-180 are each glycosylated (N-linked (GlcNAc...) asparagine). Intrachain disulfides connect Cys-47–Cys-157 and Cys-122–Cys-178. Ile-202 is lipidated: GPI-anchor amidated isoleucine. Positions 203–231 are cleaved as a propeptide — removed in mature form; it reads ASTTTGSAPRYYSWAGWLPLVAGAIWMAL.

The protein belongs to the X325 family. Requires Cu(2+) as cofactor.

The protein localises to the cell membrane. Lytic polysaccharide monooxygenase-like protein that has diverged to biological functions other than polysaccharide degradation since it does not perform oxidative cleavage of polysaccharides. Acts as a cell surface-bound protein that functions in the copper-accumulation pathway. May also act as the major cell wall sensor that regulates MAP kinase-dependent hyphal anastomosis, the fusion of hyphal cells. This Hypocrea jecorina (strain QM6a) (Trichoderma reesei) protein is Lytic polysaccharide monooxygenase-like protein X325.